A 390-amino-acid chain; its full sequence is Neuromedin-B receptor (390 aa).

Residues 1 to 19 (MPSKSLSNLSVTTGANESG) show a composition bias toward polar residues. The segment at 1-22 (MPSKSLSNLSVTTGANESGSVP) is disordered. Topologically, residues 1–41 (MPSKSLSNLSVTTGANESGSVPEGWERDFLPASDGTTTELV) are extracellular. N-linked (GlcNAc...) asparagine glycans are attached at residues Asn8 and Asn16. The helical transmembrane segment at 42-65 (IRCVIPSLYLLIITVGLLGNIMLV) threads the bilayer. The Cytoplasmic portion of the chain corresponds to 66-79 (KIFITNSAMRSVPN). The helical transmembrane segment at 80-99 (IFISNLAAGDLLLLLTCVPV) threads the bilayer. At 100–117 (DASRYFFDEWMFGKVGCK) the chain is on the extracellular side. Cys116 and Cys198 form a disulfide bridge. The chain crosses the membrane as a helical span at residues 118 to 139 (LIPVIQLTSVGVSVFTLTALSA). At 140–156 (DRYRAIVNPMDMQTSGA) the chain is on the cytoplasmic side. A helical membrane pass occupies residues 157–177 (LLRTCVKAMGIWVVSVLLAVP). The Extracellular portion of the chain corresponds to 178–211 (EAVFSEVARISSLDNSSFTACIPYPQTDELHPKI). N-linked (GlcNAc...) asparagine glycosylation occurs at Asn192. A helical membrane pass occupies residues 212–235 (HSVLIFLVYFLIPLAIISIYYYHI). Over 236-266 (AKTLIKSAHNLPGEYNEHTKKQMETRKRLAK) the chain is Cytoplasmic. The helical transmembrane segment at 267–287 (IVLVFVGCFIFCWFPNHILYM) threads the bilayer. At 288 to 299 (YRSFNYNEIDPS) the chain is on the extracellular side. Residues 300-327 (LGHMIVTLVARVLSFGNSCVNPFALYLL) form a helical membrane-spanning segment. At 328–390 (SESFRRHFNS…GHSMKQEMAL (63 aa)) the chain is on the cytoplasmic side. Cys341 carries S-palmitoyl cysteine lipidation. Ser352 bears the Phosphoserine mark.

It belongs to the G-protein coupled receptor 1 family. Expressed in epididymis (at protein level).

The protein localises to the cell membrane. Its function is as follows. Receptor for neuromedin-B. Contributes to the maintenance of basal sigh rate through signaling in the pre-Botzinger complex, a cluster of several thousand neurons in the ventrolateral medulla responsible for inspiration during respiratory activity. Contributes to the induction of sneezing following exposure to chemical irritants or allergens which causes release of NMB by nasal sensory neurons and activation of NMBR-expressing neurons in the sneeze-evoking region of the brainstem. These in turn activate neurons of the caudal ventral respiratory group, giving rise to the sneezing response. Contributes to induction of acute itch, possibly through its activation on dorsal root ganglion neurons by the NMB peptide. Plays a role in the innate immune response to influenza A virus infection by enhancing interferon alpha expression and reducing expression of IL6. Plays a role in CSF1-induced proliferation of osteoclast precursors by contributing to the positive regulation of the expression of the CSF1 receptor CSF1R. The chain is Neuromedin-B receptor (NMBR) from Homo sapiens (Human).